The chain runs to 173 residues: Crossover junction endodeoxyribonuclease RuvC (173 aa).

Active-site residues include Asp-8, Glu-67, and Asp-139. 3 residues coordinate Mg(2+): Asp-8, Glu-67, and Asp-139.

It belongs to the RuvC family. Homodimer which binds Holliday junction (HJ) DNA. The HJ becomes 2-fold symmetrical on binding to RuvC with unstacked arms; it has a different conformation from HJ DNA in complex with RuvA. In the full resolvosome a probable DNA-RuvA(4)-RuvB(12)-RuvC(2) complex forms which resolves the HJ. It depends on Mg(2+) as a cofactor.

The protein localises to the cytoplasm. The enzyme catalyses Endonucleolytic cleavage at a junction such as a reciprocal single-stranded crossover between two homologous DNA duplexes (Holliday junction).. Its function is as follows. The RuvA-RuvB-RuvC complex processes Holliday junction (HJ) DNA during genetic recombination and DNA repair. Endonuclease that resolves HJ intermediates. Cleaves cruciform DNA by making single-stranded nicks across the HJ at symmetrical positions within the homologous arms, yielding a 5'-phosphate and a 3'-hydroxyl group; requires a central core of homology in the junction. The consensus cleavage sequence is 5'-(A/T)TT(C/G)-3'. Cleavage occurs on the 3'-side of the TT dinucleotide at the point of strand exchange. HJ branch migration catalyzed by RuvA-RuvB allows RuvC to scan DNA until it finds its consensus sequence, where it cleaves and resolves the cruciform DNA. This chain is Crossover junction endodeoxyribonuclease RuvC, found in Shewanella putrefaciens (strain CN-32 / ATCC BAA-453).